The primary structure comprises 314 residues: 2,3-dihydroxyphenylpropionate/2,3-dihydroxicinnamic acid 1,2-dioxygenase (314 aa).

The Proton donor role is filled by H115. The Proton acceptor role is filled by H179.

The protein belongs to the LigB/MhpB extradiol dioxygenase family. In terms of assembly, homotetramer. Fe(2+) is required as a cofactor.

The catalysed reaction is 3-(2,3-dihydroxyphenyl)propanoate + O2 = (2Z,4E)-2-hydroxy-6-oxonona-2,4-dienedioate + H(+). The enzyme catalyses (2E)-3-(2,3-dihydroxyphenyl)prop-2-enoate + O2 = (2Z,4E,7E)-2-hydroxy-6-oxonona-2,4,7-trienedioate + H(+). The protein operates within aromatic compound metabolism; 3-phenylpropanoate degradation. Catalyzes the non-heme iron(II)-dependent oxidative cleavage of 2,3-dihydroxyphenylpropionic acid and 2,3-dihydroxicinnamic acid into 2-hydroxy-6-ketononadienedioate and 2-hydroxy-6-ketononatrienedioate, respectively. In Klebsiella pneumoniae subsp. pneumoniae (strain ATCC 700721 / MGH 78578), this protein is 2,3-dihydroxyphenylpropionate/2,3-dihydroxicinnamic acid 1,2-dioxygenase.